The sequence spans 213 residues: Probable nicotinate-nucleotide adenylyltransferase (213 aa).

The protein belongs to the NadD family.

The catalysed reaction is nicotinate beta-D-ribonucleotide + ATP + H(+) = deamido-NAD(+) + diphosphate. The protein operates within cofactor biosynthesis; NAD(+) biosynthesis; deamido-NAD(+) from nicotinate D-ribonucleotide: step 1/1. Functionally, catalyzes the reversible adenylation of nicotinate mononucleotide (NaMN) to nicotinic acid adenine dinucleotide (NaAD). In Salmonella gallinarum (strain 287/91 / NCTC 13346), this protein is Probable nicotinate-nucleotide adenylyltransferase.